The sequence spans 377 residues: UPF0754 membrane protein RBAM_010020 (377 aa).

The next 2 membrane-spanning stretches (helical) occupy residues 1–21 and 357–377; these read MGIAGTFLFMIVIGAAIGAVT and YLGGLLGGIIGAIQALFVILF.

This sequence belongs to the UPF0754 family.

The protein resides in the cell membrane. This Bacillus velezensis (strain DSM 23117 / BGSC 10A6 / LMG 26770 / FZB42) (Bacillus amyloliquefaciens subsp. plantarum) protein is UPF0754 membrane protein RBAM_010020.